Here is a 525-residue protein sequence, read N- to C-terminus: GMP synthase [glutamine-hydrolyzing] (525 aa).

Residues 8–207 (KILILDFGSQ…ALDICGCAAN (200 aa)) form the Glutamine amidotransferase type-1 domain. C85 (nucleophile) is an active-site residue. Residues H181 and E183 contribute to the active site. A GMPS ATP-PPase domain is found at 208-400 (WKPSSIIEDA…LGLPYNMLYR (193 aa)). 235-241 (SGGVDSS) is a binding site for ATP.

Homodimer.

It carries out the reaction XMP + L-glutamine + ATP + H2O = GMP + L-glutamate + AMP + diphosphate + 2 H(+). The protein operates within purine metabolism; GMP biosynthesis; GMP from XMP (L-Gln route): step 1/1. Functionally, catalyzes the synthesis of GMP from XMP. The protein is GMP synthase [glutamine-hydrolyzing] of Shewanella sp. (strain ANA-3).